We begin with the raw amino-acid sequence, 125 residues long: Large ribosomal subunit protein bL12 (125 aa).

Belongs to the bacterial ribosomal protein bL12 family. As to quaternary structure, homodimer. Part of the ribosomal stalk of the 50S ribosomal subunit. Forms a multimeric L10(L12)X complex, where L10 forms an elongated spine to which 2 to 4 L12 dimers bind in a sequential fashion. Binds GTP-bound translation factors.

Forms part of the ribosomal stalk which helps the ribosome interact with GTP-bound translation factors. Is thus essential for accurate translation. This chain is Large ribosomal subunit protein bL12, found in Thermoanaerobacter pseudethanolicus (strain ATCC 33223 / 39E) (Clostridium thermohydrosulfuricum).